The following is an 86-amino-acid chain: Kappa-theraphotoxin-Cg1a 6 (86 aa).

Positions 1–21 are cleaved as a signal peptide; the sequence is MKVSVLITLAVLGVMFVWASA. A propeptide spanning residues 22–50 is cleaved from the precursor; the sequence is AELEERGSDQRDSPAWLKSMERIFQSEER. 3 cysteine pairs are disulfide-bonded: Cys52-Cys66, Cys59-Cys71, and Cys65-Cys78. Phe84 is modified (phenylalanine amide).

This sequence belongs to the neurotoxin 10 (Hwtx-1) family. 28 (Jztx-11) subfamily. As to expression, expressed by the venom gland.

Its subcellular location is the secreted. Functionally, this toxin acts as a voltage-dependent gating-modifier. It inhibits the sodium conductance (IC(50)=124 nM) and slows the fast inactivation (EC(50)=1180 nM) of Nav1.5/SCN5A. It significantly shifts the activation to more depolarized voltages and decreases the deactivation of Nav1.5 currents upon extreme depolarization, but only slightly affects voltage-dependence of steady-state inactivation. In addition, this toxin causes an approximately five-fold decrease in the rate of recovery from inactivation and an approximately 1.9-fold reduction in the closed-state inactivation rate. This toxin integrates the functions of site 3 toxins (alpha-scorpion toxins) with site 4 toxins (beta-scorpion and spider toxins) by targeting multiple sites on Nav1.5. Also shows inhibition of voltage-gated potassium channels (5 uM completely inhibits Kv2.1/KCNB1, whereas 5 uM moderately inhibits Kv4.2/KCND2 Kv4.1/KCND1 channels). This Chilobrachys guangxiensis (Chinese earth tiger tarantula) protein is Kappa-theraphotoxin-Cg1a 6.